We begin with the raw amino-acid sequence, 149 residues long: D-aminoacyl-tRNA deacylase (149 aa).

The Gly-cisPro motif, important for rejection of L-amino acids signature appears at 137–138; the sequence is GP.

This sequence belongs to the DTD family. In terms of assembly, homodimer.

The protein resides in the cytoplasm. It catalyses the reaction glycyl-tRNA(Ala) + H2O = tRNA(Ala) + glycine + H(+). It carries out the reaction a D-aminoacyl-tRNA + H2O = a tRNA + a D-alpha-amino acid + H(+). In terms of biological role, an aminoacyl-tRNA editing enzyme that deacylates mischarged D-aminoacyl-tRNAs. Also deacylates mischarged glycyl-tRNA(Ala), protecting cells against glycine mischarging by AlaRS. Acts via tRNA-based rather than protein-based catalysis; rejects L-amino acids rather than detecting D-amino acids in the active site. By recycling D-aminoacyl-tRNA to D-amino acids and free tRNA molecules, this enzyme counteracts the toxicity associated with the formation of D-aminoacyl-tRNA entities in vivo and helps enforce protein L-homochirality. The sequence is that of D-aminoacyl-tRNA deacylase from Desulfotalea psychrophila (strain LSv54 / DSM 12343).